The chain runs to 328 residues: Acetyl-coenzyme A carboxylase carboxyl transferase subunit alpha (328 aa).

The region spanning 42-296 (SFKEQLSILK…KESLISELHF (255 aa)) is the CoA carboxyltransferase C-terminal domain.

Belongs to the AccA family. Acetyl-CoA carboxylase is a heterohexamer composed of biotin carboxyl carrier protein (accB), biotin carboxylase (accC) and two subunits each of ACCase subunit alpha (accA) and ACCase subunit beta (accD).

The protein localises to the plastid. It is found in the chloroplast. It carries out the reaction N(6)-carboxybiotinyl-L-lysyl-[protein] + acetyl-CoA = N(6)-biotinyl-L-lysyl-[protein] + malonyl-CoA. It functions in the pathway lipid metabolism; malonyl-CoA biosynthesis; malonyl-CoA from acetyl-CoA: step 1/1. In terms of biological role, component of the acetyl coenzyme A carboxylase (ACC) complex. First, biotin carboxylase catalyzes the carboxylation of biotin on its carrier protein (BCCP) and then the CO(2) group is transferred by the carboxyltransferase to acetyl-CoA to form malonyl-CoA. The chain is Acetyl-coenzyme A carboxylase carboxyl transferase subunit alpha from Gracilaria tenuistipitata var. liui (Red alga).